The primary structure comprises 246 residues: MYPEFEVVPAVDMQDGQVVQLVGGERGTEKTYGDPVEAAQRWVDAGARTLHLVDLDGAFEGERQNAAAIDAVLDAVGADVDVQLGGGIRTAEDAVSLLDRGLDRVILGTAAVETPEIVGEISDEHPGSVLVSLDAKDGEVVVSGWTEGTGLDPADAAGRYADLGAGGILFTDVDVEGQLDGVRTDPVRRLVDSVDIPVIASGGVATINDVLALRSAGAAAVVVGSALYEGQFTLDAAIDALGESSE.

Asp12 (proton acceptor) is an active-site residue. Asp134 acts as the Proton donor in catalysis.

Belongs to the HisA/HisF family.

Its subcellular location is the cytoplasm. The enzyme catalyses 1-(5-phospho-beta-D-ribosyl)-5-[(5-phospho-beta-D-ribosylamino)methylideneamino]imidazole-4-carboxamide = 5-[(5-phospho-1-deoxy-D-ribulos-1-ylimino)methylamino]-1-(5-phospho-beta-D-ribosyl)imidazole-4-carboxamide. Its pathway is amino-acid biosynthesis; L-histidine biosynthesis; L-histidine from 5-phospho-alpha-D-ribose 1-diphosphate: step 4/9. The polypeptide is 1-(5-phosphoribosyl)-5-[(5-phosphoribosylamino)methylideneamino] imidazole-4-carboxamide isomerase (Haloarcula marismortui (strain ATCC 43049 / DSM 3752 / JCM 8966 / VKM B-1809) (Halobacterium marismortui)).